Consider the following 194-residue polypeptide: Fe/S biogenesis protein NfuA (194 aa).

C152 and C155 together coordinate [4Fe-4S] cluster.

Belongs to the NfuA family. Homodimer. The cofactor is [4Fe-4S] cluster.

Functionally, involved in iron-sulfur cluster biogenesis. Binds a 4Fe-4S cluster, can transfer this cluster to apoproteins, and thereby intervenes in the maturation of Fe/S proteins. Could also act as a scaffold/chaperone for damaged Fe/S proteins. The protein is Fe/S biogenesis protein NfuA of Stutzerimonas stutzeri (strain A1501) (Pseudomonas stutzeri).